The chain runs to 240 residues: Lactate utilization protein C (240 aa).

The protein belongs to the LutC/YkgG family.

Is involved in L-lactate degradation and allows cells to grow with lactate as the sole carbon source. The protein is Lactate utilization protein C of Bacillus pumilus (strain SAFR-032).